A 240-amino-acid chain; its full sequence is Lactate utilization protein C (240 aa).

It belongs to the LutC/YkgG family.

Functionally, is involved in L-lactate degradation and allows cells to grow with lactate as the sole carbon source. In Geobacillus kaustophilus (strain HTA426), this protein is Lactate utilization protein C.